Consider the following 907-residue polypeptide: Probable disease resistance protein At1g58390 (907 aa).

The NB-ARC domain maps to 144–456 (QGDRQREMRQ…AEGISTAEDY (313 aa)). 190–197 (GMGGLGKT) lines the ATP pocket. LRR repeat units lie at residues 608 to 631 (LIHL…LGNL) and 843 to 868 (MPLL…RFIY).

Belongs to the disease resistance NB-LRR family.

Its function is as follows. Possible disease resistance protein. This is Probable disease resistance protein At1g58390 from Arabidopsis thaliana (Mouse-ear cress).